Consider the following 320-residue polypeptide: Ferrochelatase (320 aa).

Positions 194 and 275 each coordinate Fe cation.

Belongs to the ferrochelatase family. As to quaternary structure, monomer.

The protein localises to the cytoplasm. The catalysed reaction is heme b + 2 H(+) = protoporphyrin IX + Fe(2+). It participates in porphyrin-containing compound metabolism; protoheme biosynthesis; protoheme from protoporphyrin-IX: step 1/1. In terms of biological role, catalyzes the ferrous insertion into protoporphyrin IX. This is Ferrochelatase from Salmonella typhi.